Reading from the N-terminus, the 246-residue chain is E3 ubiquitin-protein ligase MARCHF2 (246 aa).

The segment at 56-116 adopts an RING-CH-type zinc-finger fold; sequence DTPSDGPFCR…ELCHTEFAVE (61 aa). The interval 56 to 116 is required for inhibition of HIV-1 virus production and VSV G protein expression; it reads DTPSDGPFCR…ELCHTEFAVE (61 aa). Positions 64, 67, 80, 82, 90, 93, 106, and 109 each coordinate Zn(2+). Positions 121 to 246 are required for interaction with IKBKG; that stretch reads PLTEWLKDPG…LKKVAEETPV (126 aa). The next 2 membrane-spanning stretches (helical) occupy residues 138–158 and 175–195; these read LCCD…SGWL and AVGL…WTLV.

Interacts with STX6; the interaction promotes MARCHF2-mediated ubiquitination and degradation of CFTR. Interacts with MARCHF3. Interacts with GOPC/CAL; the interaction leads to CFTR ubiquitination and degradation. Interacts with CFTR; the interaction leads to CFTR ubiqtuitination and degradation. Interacts (via PDZ domain) with DLG1 (via PDZ domains); the interaction leads to DLG1 ubiqtuitination and degradation. Interacts with ERGIC3. Interacts with ADRB2. Interacts with IKBKG/NEMO; during the late stages of macrophage viral and bacterial infection; the interaction leads to ubiquitination and degradation of IKBKG/NEMO. As to expression, broadly expressed.

It is found in the endoplasmic reticulum membrane. The protein localises to the lysosome membrane. The protein resides in the endosome membrane. It localises to the golgi apparatus membrane. Its subcellular location is the cytoplasm. It is found in the cell membrane. The enzyme catalyses S-ubiquitinyl-[E2 ubiquitin-conjugating enzyme]-L-cysteine + [acceptor protein]-L-lysine = [E2 ubiquitin-conjugating enzyme]-L-cysteine + N(6)-ubiquitinyl-[acceptor protein]-L-lysine.. It participates in protein modification; protein ubiquitination. In terms of biological role, E3 ubiquitin-protein ligase that may mediate ubiquitination of TFRC and CD86, and promote their subsequent endocytosis and sorting to lysosomes via multivesicular bodies. E3 ubiquitin ligases accept ubiquitin from an E2 ubiquitin-conjugating enzyme in the form of a thioester and then directly transfer the ubiquitin to targeted substrates. Together with GOPC/CAL mediates the ubiquitination and lysosomal degradation of CFTR. Ubiquitinates and therefore mediates the degradation of DLG1. Regulates the intracellular trafficking and secretion of alpha1-antitrypsin/SERPINA1 and HP/haptoglobin via ubiquitination and degradation of the cargo receptor ERGIC3. Negatively regulates the antiviral and antibacterial immune response by repression of the NF-kB and type 1 IFN signaling pathways, via MARCHF2-mediated K48-linked polyubiquitination of IKBKG/NEMO, resulting in its proteasomal degradation. May be involved in endosomal trafficking through interaction with STX6. (Microbial infection) Positively regulates the degradation of Vesicular stomatitis virus (VSV) G protein via the lysosomal degradation pathway. Represses HIV-1 viral production and may inhibit the translocation of HIV-1 env to the cell surface, resulting in decreased viral cell-cell transmission. The sequence is that of E3 ubiquitin-protein ligase MARCHF2 from Homo sapiens (Human).